Here is a 233-residue protein sequence, read N- to C-terminus: UPF0502 protein YpsIP31758_2048 (233 aa).

This sequence belongs to the UPF0502 family.

This is UPF0502 protein YpsIP31758_2048 from Yersinia pseudotuberculosis serotype O:1b (strain IP 31758).